The chain runs to 362 residues: MTTSTNNQTLTQVSNMTNHTLNSTEIYQLFEYTRLGVWLMCIVGTFLNVLVITTILYYRRKKKSPSDTYICNLAVADLLIVVGLPFFLEYAKHHPKLSREVVCSGLNACFYICLFAGVCFLINLSMDRYCVIVWGVELNRVRNNKRATCWVVIFWILAVLMGMPHYLMYSHTNNECVGEFANETSGWFPVFLNTKVNICGYLAPIALMAYTYNRMVRFIINYVGKWHMQTLHVLLVVVVSFASFWFPFNLALFLESIRLLAGVYNDTLQNVIIFCLYVGQFLAYVRACLNPGIYILVGTQMRKDMWTTLRVFACCCVKQEIPYQDIDIELQKDIQRRAKHTKRTHYDRKNAPMESGEEEFLL.

The Virion surface segment spans residues 1-34 (MTTSTNNQTLTQVSNMTNHTLNSTEIYQLFEYTR). Residues N7, N15, N18, and N22 are each glycosylated (N-linked (GlcNAc...) asparagine; by host). Residues 35-58 (LGVWLMCIVGTFLNVLVITTILYY) form a helical membrane-spanning segment. The Intravirion segment spans residues 59-67 (RRKKKSPSD). Residues 68–90 (TYICNLAVADLLIVVGLPFFLEY) form a helical membrane-spanning segment. Topologically, residues 91 to 104 (AKHHPKLSREVVCS) are virion surface. A helical membrane pass occupies residues 105–126 (GLNACFYICLFAGVCFLINLSM). Residues 127–148 (DRYCVIVWGVELNRVRNNKRAT) lie on the Intravirion side of the membrane. Residues 149 to 167 (CWVVIFWILAVLMGMPHYL) form a helical membrane-spanning segment. Residues 168-193 (MYSHTNNECVGEFANETSGWFPVFLN) lie on the Virion surface side of the membrane. Residues 194 to 213 (TKVNICGYLAPIALMAYTYN) form a helical membrane-spanning segment. Residues 214–233 (RMVRFIINYVGKWHMQTLHV) lie on the Intravirion side of the membrane. The helical transmembrane segment at 234-257 (LLVVVVSFASFWFPFNLALFLESI) threads the bilayer. Over 258 to 274 (RLLAGVYNDTLQNVIIF) the chain is Virion surface. Residues 275 to 298 (CLYVGQFLAYVRACLNPGIYILVG) traverse the membrane as a helical segment. The Intravirion segment spans residues 299-362 (TQMRKDMWTT…MESGEEEFLL (64 aa)). The tract at residues 341 to 362 (TKRTHYDRKNAPMESGEEEFLL) is disordered.

The protein belongs to the G-protein coupled receptor 1 family. Heterodimer with US28. Interacts with host Gi alpha-1 subunit GNAI1; this interaction does not lead to the catalytic activation of Gi complex.

It is found in the virion. Its subcellular location is the host cell membrane. Interacts with the host Gi complex without activating it, thereby probably interfering with the chemokine-Gi signaling. May also function as a G protein sink to sequester G protein from the cell surface via internalization. Plays an important role in spread of HCMV via the extracellular route. The sequence is that of G-protein coupled receptor homolog US27 (US27) from Homo sapiens (Human).